The following is a 276-amino-acid chain: Nickel import system permease protein NikC (276 aa).

The next 5 membrane-spanning stretches (helical) occupy residues 10 to 30 (LIFFVFGAFIFVMIVLQFFVS), 73 to 93 (LFVTVLTLIAIVVIGVTLGLF), 108 to 128 (FIDVGLSIPEFIIVIALASFF), 186 to 206 (IIPAIIVLMVVDFGKIILYIS), and 238 to 258 (IMLIAPASVIAITILIFNLTG). The ABC transmembrane type-1 domain occupies 69–258 (ARSTLFVTVL…ITILIFNLTG (190 aa)).

It belongs to the binding-protein-dependent transport system permease family. OppBC subfamily. As to quaternary structure, the complex is composed of two ATP-binding proteins (NikD and NikE), two transmembrane proteins (NikB and NikC) and a solute-binding protein (NikA).

The protein localises to the cell membrane. Functionally, part of the ABC transporter complex NikABCDE (Opp2) involved in nickel import. Probably responsible for the translocation of the substrate across the membrane. This chain is Nickel import system permease protein NikC, found in Staphylococcus aureus (strain bovine RF122 / ET3-1).